A 528-amino-acid chain; its full sequence is Adhesion G-protein coupled receptor G5 (528 aa).

Positions 1-21 are cleaved as a signal peptide; it reads MDHCGALFLCLCLLTLQNATT. Topologically, residues 22-245 are extracellular; sequence ETWEELLSYM…SPALVPAELL (224 aa). Asparagine 58, asparagine 65, asparagine 146, asparagine 147, asparagine 173, and asparagine 179 each carry an N-linked (GlcNAc...) asparagine glycan. The region spanning 78-239 is the GAIN-B domain; sequence FKLSCDFSGL…AVLMQLSPAL (162 aa). 2 disulfides stabilise this stretch: cysteine 189–cysteine 221 and cysteine 209–cysteine 223. The interval 189–239 is GPS; sequence CVFWKEGARKQPWGGWSPEGCRTEQPSHSQVLCRCNHLTYFAVLMQLSPAL. The segment at 228–236 is stachel; the sequence is YFAVLMQLS. A helical membrane pass occupies residues 246–271; the sequence is APLTYISLVGCSISIVASLITVLLHF. Topologically, residues 272–280 are cytoplasmic; it reads HFRKQSDSL. A helical transmembrane segment spans residues 281 to 304; the sequence is TRIHMNLHASVLLLNIAFLLSPAF. The Extracellular segment spans residues 305–314; that stretch reads AMSPVPGSAC. Cysteine 314 and cysteine 404 form a disulfide bridge. A helical membrane pass occupies residues 315–340; sequence TALAAALHYALLSCLTWMAIEGFNLY. Residues 341-353 are Cytoplasmic-facing; sequence LLLGRVYNIYIRR. Residues 354 to 377 traverse the membrane as a helical segment; the sequence is YVFKLGVLGWGAPALLVLLSLSVK. Topologically, residues 378–410 are extracellular; the sequence is SSVYGPCTIPVFDSWENGTGFQNMSICWVRSPV. N-linked (GlcNAc...) asparagine glycosylation is found at asparagine 394 and asparagine 400. A helical membrane pass occupies residues 411 to 435; that stretch reads VHSVLVMGYGGLTSLFNLVVLAWAL. Over 436 to 455 the chain is Cytoplasmic; sequence WTLRRLRERADAPSVRACHD. Residues 456 to 477 traverse the membrane as a helical segment; it reads TVTVLGLTVLLGTTWALAFFSF. Residues 478–481 lie on the Extracellular side of the membrane; it reads GVFL. Residues 482–505 form a helical membrane-spanning segment; the sequence is LPQLFLFTILNSLYGFFLFLWFCS. The Cytoplasmic portion of the chain corresponds to 506–528; sequence QRCRSEAEAKAQIEAFSSSQTTQ.

The protein belongs to the G-protein coupled receptor 2 family. Adhesion G-protein coupled receptor (ADGR) subfamily. Heterodimer of 2 chains generated by proteolytic processing; the large extracellular N-terminal fragment and the membrane-bound C-terminal fragment predominantly remain associated and non-covalently linked. Post-translationally, autoproteolytically processed at the GPS region of the GAIN-B domain; this cleavage modulates receptor activity. In terms of processing, N-glycsylated. In terms of tissue distribution, expressed in immune cells. Primarily found in granulocytes. Found in eosinophils.

It is found in the cell membrane. Forms a heterodimer of 2 chains generated by proteolytic processing that remain associated through non-covalent interactions mediated by the GAIN-B domain. In the inactivated receptor, the Stachel sequence (also named stalk) is embedded in the GAIN-B domain, where it adopts a beta-strand conformation. On activation, the Stachel moves into the 7 transmembrane region and adopts a twisted hook-shaped configuration that forms contacts within the receptor, leading to coupling of a G-alpha protein, which activates signaling. The cleaved GAIN-B and N-terminal domains can then dissociate from the rest of the receptor. Functionally, orphan adhesion G-protein coupled receptor (aGPCR). Ligand binding causes a conformation change that triggers signaling via guanine nucleotide-binding proteins (G proteins) and modulates the activity of downstream effectors, such as adenylate cyclase. ADGRG5 is specifically coupled to G(s) G proteins and mediates activation of adenylate cyclase activity. This is Adhesion G-protein coupled receptor G5 from Homo sapiens (Human).